We begin with the raw amino-acid sequence, 234 residues long: CKLF-like MARVEL transmembrane domain-containing protein 4 (234 aa).

The segment covering 1 to 11 (MRSGEELDGFE) has biased composition (acidic residues). The interval 1–38 (MRSGEELDGFEGEASSTSMISGASSPYQPTTEPVSQRR) is disordered. A compositionally biased stretch (low complexity) spans 15 to 25 (SSTSMISGASS). An MARVEL domain is found at 49–176 (YLRGALGRLK…NTFLAVQKWR (128 aa)). The next 4 helical transmembrane spans lie at 59 to 79 (VAQV…MACS), 85 to 105 (YFFE…LIMF), 123 to 143 (LVNT…LAAL), and 151 to 171 (IAAV…TFLA). The residue at position 194 (Ser-194) is a Phosphoserine.

The protein belongs to the chemokine-like factor family. Interacts with PD-L1/CD274 and CMTM6. Highly expressed in testis and prostate.

The protein localises to the membrane. Acts as a backup for CMTM6 to regulate plasma membrane expression of PD-L1/CD274, an immune inhibitory ligand critical for immune tolerance to self and antitumor immunity. May protect PD-L1/CD274 from being polyubiquitinated and targeted for degradation. This is CKLF-like MARVEL transmembrane domain-containing protein 4 from Homo sapiens (Human).